A 1036-amino-acid chain; its full sequence is Isoleucine--tRNA ligase (1036 aa).

Residues 46-56 carry the 'HIGH' region motif; sequence PFATGLPHYGH. Residues 589–593 carry the 'KMSKS' region motif; that stretch reads KMSKR. Position 592 (Lys-592) interacts with ATP.

The protein belongs to the class-I aminoacyl-tRNA synthetase family. IleS type 2 subfamily. In terms of assembly, monomer. Requires Zn(2+) as cofactor.

The protein resides in the cytoplasm. The catalysed reaction is tRNA(Ile) + L-isoleucine + ATP = L-isoleucyl-tRNA(Ile) + AMP + diphosphate. Functionally, catalyzes the attachment of isoleucine to tRNA(Ile). As IleRS can inadvertently accommodate and process structurally similar amino acids such as valine, to avoid such errors it has two additional distinct tRNA(Ile)-dependent editing activities. One activity is designated as 'pretransfer' editing and involves the hydrolysis of activated Val-AMP. The other activity is designated 'posttransfer' editing and involves deacylation of mischarged Val-tRNA(Ile). In Chlamydia trachomatis serovar L2 (strain ATCC VR-902B / DSM 19102 / 434/Bu), this protein is Isoleucine--tRNA ligase.